Here is a 550-residue protein sequence, read N- to C-terminus: Fusion glycoprotein F0 (550 aa).

An N-terminal signal peptide occupies residues 1 to 23 (MGLKVNVSAIFMAVLLTLQTPTG). Over 24-487 (QIHWGNLSKI…ESSDQILRSM (464 aa)) the chain is Extracellular. N-linked (GlcNAc...) asparagine; by host glycosylation is found at N29, N61, and N67. Residues 69–95 (TRVEIAEYRRLLRTVLEPIRDALNAMT) are HRC. Residues 113-138 (FAGVVLAGAALGVATAAQITAGIALH) form a fusion peptide region. Positions 138–166 (HQSMLNSQAIDNLRASLETTNQAIEAIRQ) form a coiled coil. Residues 139–215 (QSMLNSQAID…LLRYYTEILS (77 aa)) are HRA. Cystine bridges form between C334-C343, C358-C366, C390-C395, and C397-C420. An interaction with hemagglutinin region spans residues 367–444 (ARTLVSGSFG…RRYPDAVYLH (78 aa)). The HRB stretch occupies residues 445–494 (RIDLGPPILLERLDVGTNLGNAIAKLEDAKELLESSDQILRSMKGLSSTC). The stretch at 462–487 (NLGNAIAKLEDAKELLESSDQILRSM) forms a coiled coil. A helical membrane pass occupies residues 488 to 518 (KGLSSTCIVYILIAVCLGGLIGIPALICCCR). At 519 to 550 (GRCNKKGEQVGMSRPGLKPDLTGTSKSYVRSL) the chain is on the cytoplasmic side.

It belongs to the paramyxoviruses fusion glycoprotein family. In terms of assembly, homotrimer of disulfide-linked F1-F2. The inactive precursor F0 is glycosylated and proteolytically cleaved into F1 and F2 to be functionally active. The cleavage is mediated by host furin during the transport and maturation of the polypeptide.

The protein resides in the virion membrane. It localises to the host cell membrane. Functionally, class I viral fusion protein. Under the current model, the protein has at least 3 conformational states: pre-fusion native state, pre-hairpin intermediate state, and post-fusion hairpin state. During viral and plasma cell membrane fusion, the heptad repeat (HR) regions assume a trimer-of-hairpins structure, positioning the fusion peptide in close proximity to the C-terminal region of the ectodomain. The formation of this structure appears to drive apposition and subsequent fusion of viral and plasma cell membranes. Directs fusion of viral and cellular membranes leading to delivery of the nucleocapsid into the cytoplasm. This fusion is pH independent and occurs directly at the outer cell membrane. During viral entry or virus-mediated fusion between infected cells and neighboring susceptible cells, the head domain of the H protein initially binds to its receptor and then the stalk region of the H protein transmits the fusion-triggering signal to the F protein. Upon HN binding to its cellular receptor, the hydrophobic fusion peptide is unmasked and interacts with the cellular membrane, inducing the fusion between cell and virion membranes. Later in infection, F proteins expressed at the plasma membrane of infected cells could mediate fusion with adjacent cells to form syncytia, a cytopathic effect that could lead to tissue necrosis. Some hyperfusogenic isolates can induce membrane fusion in SLAM- and nectin-4-negative cells and are linked to fatal subacute sclerosing panencephalitis (SSPE) or measles inclusion body encephalitis (MIBE). The neuropathogenicity is closely associated with enhanced propagation mediated by cell-to-cell fusion in the brain, which is principally regulated by hyperfusogenic mutations of the viral F protein. Cell-to-cell transmission of the virus also occurs with hyperfusogenic isolates. The polypeptide is Fusion glycoprotein F0 (F) (Homo sapiens (Human)).